We begin with the raw amino-acid sequence, 548 residues long: Inosine-5'-monophosphate dehydrogenase (548 aa).

CBS domains are found at residues 121 to 201 and 205 to 261; these read FILD…EDPV and MSTE…PLAS. Residues 298–300 and 348–350 each bind NAD(+); these read DSS and GMG. K(+)-binding residues include glycine 350 and glycine 352. Residue serine 353 coordinates IMP. A K(+)-binding site is contributed by cysteine 355. The active-site Thioimidate intermediate is cysteine 355. IMP-binding positions include 388-390 and 411-412; these read DGG and GS. Catalysis depends on arginine 461, which acts as the Proton acceptor. IMP is bound at residue glutamine 473. The disordered stretch occupies residues 527-548; it reads ASAQTEGNVHGLHSHEKKLYSS. Position 528 (serine 528) interacts with K(+). Residues 539-548 are compositionally biased toward basic and acidic residues; that stretch reads HSHEKKLYSS.

It belongs to the IMPDH/GMPR family. Homotetramer. K(+) is required as a cofactor.

It localises to the cytoplasm. It catalyses the reaction IMP + NAD(+) + H2O = XMP + NADH + H(+). It functions in the pathway purine metabolism; XMP biosynthesis via de novo pathway; XMP from IMP: step 1/1. Mycophenolic acid (MPA) is a non-competitive inhibitor that prevents formation of the closed enzyme conformation by binding to the same site as the amobile flap. In contrast, mizoribine monophosphate (MZP) is a competitive inhibitor that induces the closed conformation. MPA is a potent inhibitor of mammalian IMPDHs but a poor inhibitor of the bacterial enzymes. MZP is a more potent inhibitor of bacterial IMPDH. Catalyzes the conversion of inosine 5'-phosphate (IMP) to xanthosine 5'-phosphate (XMP), the first committed and rate-limiting step in the de novo synthesis of guanine nucleotides, and therefore plays an important role in the regulation of cell growth. Part of the gene cluster that mediates the biosynthesis of mycophenolic acid (MPA), the first isolated antibiotic natural product in the world. Does not play a role in the biosynthesis of MPA, but is involved in self resistance to MPA, since MPA acts as an inhibitor of IMP dehydrogenases. This is Inosine-5'-monophosphate dehydrogenase from Penicillium brevicompactum.